A 658-amino-acid polypeptide reads, in one-letter code: Cysteine-rich receptor-like protein kinase 14 (658 aa).

A signal peptide spans Met-1–Ala-22. 2 Gnk2-homologous domains span residues Gln-23–Phe-125 and Ala-131–Phe-240. Over Gln-23–Ser-277 the chain is Extracellular. Residues Asn-51, Asn-60, Asn-102, Asn-122, and Asn-146 are each glycosylated (N-linked (GlcNAc...) asparagine). A helical membrane pass occupies residues Ile-278 to Ala-298. At Leu-299–Arg-658 the chain is on the cytoplasmic side. The Protein kinase domain maps to Phe-337–Val-614. ATP is bound by residues Ile-343 to Val-351 and Lys-364. Residue Tyr-409 is modified to Phosphotyrosine. Asp-461 functions as the Proton acceptor in the catalytic mechanism. Ser-465 bears the Phosphoserine mark. Thr-501 is modified (phosphothreonine). Residue Tyr-509 is modified to Phosphotyrosine.

It belongs to the protein kinase superfamily. Ser/Thr protein kinase family. CRK subfamily.

It localises to the membrane. It carries out the reaction L-seryl-[protein] + ATP = O-phospho-L-seryl-[protein] + ADP + H(+). The catalysed reaction is L-threonyl-[protein] + ATP = O-phospho-L-threonyl-[protein] + ADP + H(+). The polypeptide is Cysteine-rich receptor-like protein kinase 14 (CRK14) (Arabidopsis thaliana (Mouse-ear cress)).